Consider the following 1378-residue polypeptide: Hybrid signal transduction histidine kinase H (1378 aa).

Residues 212–242 (KEKFKKEELINDFKSRLETLENKIDQRVDER) are a coiled coil. Residues 243–314 (IETRFKYVLE…NNNNNNNNNN (72 aa)) enclose the PAS domain. Residues 294-337 (YQQHNNNNNNNNNNNNNNNNNNNNNSNNKSPIINSPNTTSPTNT) form a disordered region. Residues 298–337 (NNNNNNNNNNNNNNNNNNNNNSNNKSPIINSPNTTSPTNT) are compositionally biased toward low complexity. The Histidine kinase domain occupies 498-805 (TMSHEMRTPL…SFHFLVEVFF (308 aa)). Histidine 501 is modified (phosphohistidine; by autocatalysis). Over residues 663–696 (NNSNNSNNNHNHNNNNNNNNHLNCSGSFNNNGFN) the composition is skewed to low complexity. Disordered regions lie at residues 663 to 717 (NNSN…DKHC), 905 to 924 (TNNN…STTT), and 1103 to 1213 (NNSN…HPNP). The segment covering 697–714 (HGHHHHHHHHHHHHHHHD) has biased composition (basic residues). Low complexity-rich tracts occupy residues 1103–1119 (NNSN…SGSS) and 1136–1187 (SPSL…NNNN). Residues 1188-1206 (LNHYNSDSILSSDLSPQQH) are compositionally biased toward polar residues. The Response regulatory domain maps to 1244 to 1364 (KIMVAEDSLV…ILAVELKRAW (121 aa)). The residue at position 1297 (aspartate 1297) is a 4-aspartylphosphate.

In terms of processing, activation probably requires transfer of a phosphate group between a histidine in the kinase core (transmitter) domain and an aspartate of the receiver domain.

The catalysed reaction is ATP + protein L-histidine = ADP + protein N-phospho-L-histidine.. Its function is as follows. Acts as a receptor histidine kinase for a signal transduction pathway. This protein undergoes an ATP-dependent autophosphorylation at a conserved histidine residue in the kinase core, and a phosphoryl group is then transferred to a conserved aspartate residue in the receiver domain. This is Hybrid signal transduction histidine kinase H (dhkH) from Dictyostelium discoideum (Social amoeba).